The chain runs to 248 residues: Delayed minus-nitrogen induction protein 2 (248 aa).

Transmembrane regions (helical) follow at residues 26–46 (IFSNAILGIAWLFLIFLCCSC), 110–130 (VHPVLLAIVVVFSTLSIVLTI), 144–164 (ISCLTTSTAACLLLALQMALA), and 186–206 (GVAAAVFGWISSGFFLLFSLI).

It belongs to the SUR7 family.

It localises to the membrane. In Schizosaccharomyces pombe (strain 972 / ATCC 24843) (Fission yeast), this protein is Delayed minus-nitrogen induction protein 2 (dni2).